The sequence spans 288 residues: Quinate/shikimate dehydrogenase (288 aa).

The substrate site is built by Lys-71 and Asp-107. NAD(+)-binding positions include 132–135 (AGGA), 155–158 (NRRD), Lys-205, 232–235 (CVYN), and Gly-255.

It belongs to the shikimate dehydrogenase family. As to quaternary structure, homodimer.

It catalyses the reaction L-quinate + NAD(+) = 3-dehydroquinate + NADH + H(+). The enzyme catalyses L-quinate + NADP(+) = 3-dehydroquinate + NADPH + H(+). It carries out the reaction shikimate + NADP(+) = 3-dehydroshikimate + NADPH + H(+). The catalysed reaction is shikimate + NAD(+) = 3-dehydroshikimate + NADH + H(+). The protein operates within metabolic intermediate biosynthesis; chorismate biosynthesis; chorismate from D-erythrose 4-phosphate and phosphoenolpyruvate: step 4/7. Its function is as follows. The actual biological function of YdiB remains unclear, nor is it known whether 3-dehydroshikimate or quinate represents the natural substrate. Catalyzes the reversible NAD-dependent reduction of both 3-dehydroshikimate (DHSA) and 3-dehydroquinate to yield shikimate (SA) and quinate, respectively. It can use both NAD or NADP for catalysis, however it has higher catalytic efficiency with NAD. This Shigella sonnei (strain Ss046) protein is Quinate/shikimate dehydrogenase.